The following is a 1286-amino-acid chain: DNA-directed RNA polymerase 147 kDa polypeptide (1286 aa).

It belongs to the poxviridae DNA-directed RNA polymerase 147 kDa subunit family. As to quaternary structure, the DNA-dependent RNA polymerase used for intermediate and late genes expression consists of eight subunits Rpo30/OPG66, Rpo7/OPG90, Rpo22/OPG103, Rpo147/OPG105, Rpo18/OPG119, Rpo19/OPG131, Rpo132/OPG151 and Rpo35/OPG156. The same holoenzyme, with the addition of the transcription-specificity factor OPG109, is used for early gene expression.

Its subcellular location is the virion. The catalysed reaction is RNA(n) + a ribonucleoside 5'-triphosphate = RNA(n+1) + diphosphate. Part of the DNA-dependent RNA polymerase which catalyzes the transcription of viral DNA into RNA using the four ribonucleoside triphosphates as substrates. Responsible for the transcription of early, intermediate and late genes. DNA-dependent RNA polymerase associates with the early transcription factor (ETF), itself composed of OPG118 and OPG133, thereby allowing the early genes transcription. Late transcription, and probably also intermediate transcription, require newly synthesized RNA polymerase. This is DNA-directed RNA polymerase 147 kDa polypeptide (OPG105) from Variola virus (isolate Human/India/Ind3/1967) (VARV).